Reading from the N-terminus, the 395-residue chain is S-adenosylmethionine synthase (395 aa).

His-16 serves as a coordination point for ATP. Residue Asp-18 participates in Mg(2+) binding. Glu-44 is a K(+) binding site. The L-methionine site is built by Glu-57 and Gln-100. Positions 100–110 are flexible loop; that stretch reads QSPDIAQGVDR. Residues 167–169, 233–234, Asp-242, 248–249, Ala-265, and Lys-269 each bind ATP; these read DAK, RF, and RK. Residue Asp-242 participates in L-methionine binding. Lys-273 is an L-methionine binding site.

Belongs to the AdoMet synthase family. Homotetramer; dimer of dimers. Mg(2+) serves as cofactor. Requires K(+) as cofactor.

It is found in the cytoplasm. The catalysed reaction is L-methionine + ATP + H2O = S-adenosyl-L-methionine + phosphate + diphosphate. The protein operates within amino-acid biosynthesis; S-adenosyl-L-methionine biosynthesis; S-adenosyl-L-methionine from L-methionine: step 1/1. In terms of biological role, catalyzes the formation of S-adenosylmethionine (AdoMet) from methionine and ATP. The overall synthetic reaction is composed of two sequential steps, AdoMet formation and the subsequent tripolyphosphate hydrolysis which occurs prior to release of AdoMet from the enzyme. The chain is S-adenosylmethionine synthase from Burkholderia mallei (strain NCTC 10247).